The sequence spans 355 residues: Protein pelota homolog (355 aa).

Belongs to the eukaryotic release factor 1 family. Pelota subfamily. As to quaternary structure, monomer. It depends on a divalent metal cation as a cofactor.

It localises to the cytoplasm. Functionally, may function in recognizing stalled ribosomes, interact with stem-loop structures in stalled mRNA molecules, and effect endonucleolytic cleavage of the mRNA. May play a role in the release non-functional ribosomes and degradation of damaged mRNAs. Has endoribonuclease activity. In Halorubrum lacusprofundi (strain ATCC 49239 / DSM 5036 / JCM 8891 / ACAM 34), this protein is Protein pelota homolog.